Reading from the N-terminus, the 197-residue chain is Dephospho-CoA kinase (197 aa).

Positions 2 to 197 (IIGLTGGIGS…HTKYMELLNE (196 aa)) constitute a DPCK domain. 10 to 15 (GSGKSA) provides a ligand contact to ATP.

The protein belongs to the CoaE family.

It localises to the cytoplasm. The enzyme catalyses 3'-dephospho-CoA + ATP = ADP + CoA + H(+). It functions in the pathway cofactor biosynthesis; coenzyme A biosynthesis; CoA from (R)-pantothenate: step 5/5. Catalyzes the phosphorylation of the 3'-hydroxyl group of dephosphocoenzyme A to form coenzyme A. The chain is Dephospho-CoA kinase from Gamma-proteobacterium EBAC31A08.